A 238-amino-acid polypeptide reads, in one-letter code: Tyrosine recombinase XerD-like (238 aa).

Residues 1–75 (MKLPNEIEEY…SANQYFLFLY (75 aa)) form the Core-binding (CB) domain. Residues 90 to 238 (VQKKTQSSES…TITALEKYYR (149 aa)) form the Tyr recombinase domain. Residues lysine 154 and arginine 204 contribute to the active site. The active-site O-(3'-phospho-DNA)-tyrosine intermediate is tyrosine 236.

The protein belongs to the 'phage' integrase family. XerD-like subfamily.

It is found in the cytoplasm. Its function is as follows. Putative tyrosine recombinase. Not involved in the cutting and rejoining of the recombining DNA molecules on dif(SL) site. This is Tyrosine recombinase XerD-like from Lactococcus lactis subsp. cremoris (strain SK11).